The chain runs to 172 residues: Counting factor-associated protein B (172 aa).

An N-terminal signal peptide occupies residues 1–21; sequence MKLLNSLILLVLTCLVSSINT. Asparagine 37 and asparagine 153 each carry an N-linked (GlcNAc...) asparagine glycan.

The protein localises to the secreted. The sequence is that of Counting factor-associated protein B (cfaB) from Dictyostelium discoideum (Social amoeba).